A 539-amino-acid chain; its full sequence is Phosphoenolpyruvate carboxykinase (ATP) (539 aa).

Substrate-binding residues include R64, Y206, and K212. Residues K212, H231, and 247-255 (GLSGTGKTT) contribute to the ATP site. Residues K212 and H231 each contribute to the Mn(2+) site. A Mn(2+)-binding site is contributed by D268. ATP contacts are provided by residues E296, R332, 448 to 449 (RI), and T454. R332 provides a ligand contact to substrate.

It belongs to the phosphoenolpyruvate carboxykinase (ATP) family. As to quaternary structure, monomer. Mn(2+) is required as a cofactor.

The protein localises to the cytoplasm. It carries out the reaction oxaloacetate + ATP = phosphoenolpyruvate + ADP + CO2. It participates in carbohydrate biosynthesis; gluconeogenesis. Functionally, involved in the gluconeogenesis. Catalyzes the conversion of oxaloacetate (OAA) to phosphoenolpyruvate (PEP) through direct phosphoryl transfer between the nucleoside triphosphate and OAA. The protein is Phosphoenolpyruvate carboxykinase (ATP) of Cronobacter sakazakii (strain ATCC BAA-894) (Enterobacter sakazakii).